The sequence spans 252 residues: Transcription factor bHLH117 (252 aa).

A disordered region spans residues 103–141 (LFPSLSPPLPAAKRQKLNSTSSSTTSGSPTASNDGGIIT). The segment covering 121-134 (STSSSTTSGSPTAS) has biased composition (low complexity). Residues 130–179 (SPTASNDGGIITKRRKISDKIRSLEKLMPWERKMNLAMTLEESHKYIKFL) enclose the bHLH domain.

In terms of assembly, homodimer.

The protein localises to the nucleus. The polypeptide is Transcription factor bHLH117 (BHLH117) (Arabidopsis thaliana (Mouse-ear cress)).